The following is an 894-amino-acid chain: DNA mismatch repair protein MutS (894 aa).

632-639 is an ATP binding site; it reads GPNMGGKS.

It belongs to the DNA mismatch repair MutS family.

In terms of biological role, this protein is involved in the repair of mismatches in DNA. It is possible that it carries out the mismatch recognition step. This protein has a weak ATPase activity. The polypeptide is DNA mismatch repair protein MutS (Paraburkholderia xenovorans (strain LB400)).